A 79-amino-acid polypeptide reads, in one-letter code: NADH-ubiquinone oxidoreductase chain 5 (79 aa).

2 consecutive transmembrane segments (helical) span residues 5-27 (TPIM…TNPY) and 40-57 (VMYA…FILS).

Belongs to the complex I subunit 5 family. As to quaternary structure, core subunit of respiratory chain NADH dehydrogenase (Complex I) which is composed of 45 different subunits.

It localises to the mitochondrion inner membrane. The catalysed reaction is a ubiquinone + NADH + 5 H(+)(in) = a ubiquinol + NAD(+) + 4 H(+)(out). Its function is as follows. Core subunit of the mitochondrial membrane respiratory chain NADH dehydrogenase (Complex I) which catalyzes electron transfer from NADH through the respiratory chain, using ubiquinone as an electron acceptor. Essential for the catalytic activity and assembly of complex I. This Macaca fascicularis (Crab-eating macaque) protein is NADH-ubiquinone oxidoreductase chain 5 (MT-ND5).